A 468-amino-acid polypeptide reads, in one-letter code: ATP synthase subunit beta (468 aa).

G155–T162 lines the ATP pocket.

The protein belongs to the ATPase alpha/beta chains family. F-type ATPases have 2 components, CF(1) - the catalytic core - and CF(0) - the membrane proton channel. CF(1) has five subunits: alpha(3), beta(3), gamma(1), delta(1), epsilon(1). CF(0) has three main subunits: a(1), b(2) and c(9-12). The alpha and beta chains form an alternating ring which encloses part of the gamma chain. CF(1) is attached to CF(0) by a central stalk formed by the gamma and epsilon chains, while a peripheral stalk is formed by the delta and b chains.

The protein localises to the cell membrane. The enzyme catalyses ATP + H2O + 4 H(+)(in) = ADP + phosphate + 5 H(+)(out). Produces ATP from ADP in the presence of a proton gradient across the membrane. The catalytic sites are hosted primarily by the beta subunits. In Streptococcus pyogenes serotype M3 (strain ATCC BAA-595 / MGAS315), this protein is ATP synthase subunit beta.